Reading from the N-terminus, the 108-residue chain is Nucleoid-associated protein HCH_02614 (108 aa).

This sequence belongs to the YbaB/EbfC family. In terms of assembly, homodimer.

It is found in the cytoplasm. The protein resides in the nucleoid. Binds to DNA and alters its conformation. May be involved in regulation of gene expression, nucleoid organization and DNA protection. This Hahella chejuensis (strain KCTC 2396) protein is Nucleoid-associated protein HCH_02614.